The chain runs to 886 residues: Valine--tRNA ligase (886 aa).

The short motif at 43 to 53 is the 'HIGH' region element; that stretch reads PYPTGRMHLGH. The 'KMSKS' region motif lies at 528 to 532; that stretch reads KMSKS. Lys-531 is a binding site for ATP.

It belongs to the class-I aminoacyl-tRNA synthetase family. ValS type 2 subfamily.

The protein resides in the cytoplasm. It catalyses the reaction tRNA(Val) + L-valine + ATP = L-valyl-tRNA(Val) + AMP + diphosphate. Catalyzes the attachment of valine to tRNA(Val). As ValRS can inadvertently accommodate and process structurally similar amino acids such as threonine, to avoid such errors, it has a 'posttransfer' editing activity that hydrolyzes mischarged Thr-tRNA(Val) in a tRNA-dependent manner. This is Valine--tRNA ligase from Methanococcus maripaludis (strain DSM 14266 / JCM 13030 / NBRC 101832 / S2 / LL).